The primary structure comprises 199 residues: Cytosine-containing mismatch-binding protein 1 (199 aa).

The HMG box DNA-binding region spans 123-197 (PKKPSSAFIL…QYDKFMKEAG (75 aa)).

Monomer.

The protein localises to the nucleus. Functionally, binds to cytosines in base mismatches and opposite chemically altered guanines. May be involved in repair of DNA damage. The protein is Cytosine-containing mismatch-binding protein 1 of Schizosaccharomyces pombe (strain 972 / ATCC 24843) (Fission yeast).